A 180-amino-acid chain; its full sequence is Large ribosomal subunit protein uL10 (180 aa).

It belongs to the universal ribosomal protein uL10 family. As to quaternary structure, part of the ribosomal stalk of the 50S ribosomal subunit. The N-terminus interacts with L11 and the large rRNA to form the base of the stalk. The C-terminus forms an elongated spine to which L12 dimers bind in a sequential fashion forming a multimeric L10(L12)X complex.

In terms of biological role, forms part of the ribosomal stalk, playing a central role in the interaction of the ribosome with GTP-bound translation factors. The protein is Large ribosomal subunit protein uL10 of Thermosipho africanus (strain TCF52B).